The chain runs to 130 residues: MIGEWNNGTGRRKSSVARVFLKKGSGKITVNGKDIQQYFGRETSIMIAKQPLVLTNHVETFDIQVNVHGGGESGQAGATRHGITRALIDYDATLKSALSQAGFVTRDAREVERKKVGLHSARRAKQFSKR.

The protein belongs to the universal ribosomal protein uS9 family.

This chain is Small ribosomal subunit protein uS9, found in Paracidovorax citrulli (strain AAC00-1) (Acidovorax citrulli).